A 102-amino-acid chain; its full sequence is Large ribosomal subunit protein bL21 (102 aa).

The protein belongs to the bacterial ribosomal protein bL21 family. As to quaternary structure, part of the 50S ribosomal subunit. Contacts protein L20.

Functionally, this protein binds to 23S rRNA in the presence of protein L20. The sequence is that of Large ribosomal subunit protein bL21 from Geobacter sp. (strain M21).